The primary structure comprises 199 residues: Probable chemoreceptor glutamine deamidase CheD (199 aa).

The protein belongs to the CheD family.

The enzyme catalyses L-glutaminyl-[protein] + H2O = L-glutamyl-[protein] + NH4(+). In terms of biological role, probably deamidates glutamine residues to glutamate on methyl-accepting chemotaxis receptors (MCPs), playing an important role in chemotaxis. The protein is Probable chemoreceptor glutamine deamidase CheD of Cereibacter sphaeroides (strain ATCC 17025 / ATH 2.4.3) (Rhodobacter sphaeroides).